Consider the following 1205-residue polypeptide: Nitric oxide synthase 3 (1205 aa).

The tract at residues 1–73 (MGNLKSVGQE…PPEGPKFPRV (73 aa)) is disordered. A lipid anchor (N-myristoyl glycine) is attached at glycine 2. Residues cysteine 15 and cysteine 26 are each lipidated (S-palmitoyl cysteine). Residues 15–27 (CGLGLGLGLGLCG) show a composition bias toward gly residues. Over residues 33-47 (TPAPEPSRAPAPATP) the composition is skewed to pro residues. 2 residues coordinate Zn(2+): cysteine 96 and cysteine 101. Residues 100-488 (RCLGSLVLPR…PDPWKGSAAK (389 aa)) are interaction with NOSIP. Residue serine 104 coordinates (6R)-L-erythro-5,6,7,8-tetrahydrobiopterin. The residue at position 116 (serine 116) is a Phosphoserine; by CDK5. Cysteine 186 contacts heme b. The L-arginine site is built by glutamine 249, tryptophan 358, tyrosine 359, glutamate 363, and asparagine 368. 3 residues coordinate (6R)-L-erythro-5,6,7,8-tetrahydrobiopterin: alanine 448, tryptophan 449, and phenylalanine 462. Position 477 (tyrosine 477) interacts with heme b. A calmodulin-binding region spans residues 492 to 512 (IARKKTFKEVANAVKISASLM). A Phosphothreonine; by AMPK modification is found at threonine 497. Residues 522–705 (ASILYASETV…AFRGWAQAAF (184 aa)) form the Flavodoxin-like domain. Residues serine 528, glutamate 529, threonine 530, arginine 532, serine 574, and threonine 575 each coordinate FMN. A phosphoserine mark is found at serine 617, serine 635, and serine 640. Residues serine 656, cysteine 663, glutamate 689, and glutamine 693 each coordinate FMN. The FAD-binding FR-type domain maps to 758-1004 (RKMFQATVLS…IRAAPSFRLP (247 aa)). Residue arginine 778 participates in NADP(+) binding. Histidine 800 serves as a coordination point for FAD. The tract at residues 820 to 848 (EDPTPPTESVGVEQLEKGSPGGPPPSWVR) is disordered. At serine 838 the chain carries Phosphoserine. 9 residues coordinate FAD: arginine 940, tyrosine 942, serine 943, threonine 958, alanine 960, tyrosine 964, valine 977, cysteine 978, and serine 979. NADP(+)-binding residues include threonine 1018, arginine 1051, serine 1080, arginine 1081, lysine 1087, tyrosine 1089, and glutamine 1091. Threonine 1177 is modified (phosphothreonine). Serine 1179 is modified (phosphoserine; by AMPK). At serine 1181 the chain carries Phosphoserine.

This sequence belongs to the NOS family. As to quaternary structure, homodimer. Interacts with NOSIP and NOSTRIN. Interacts with HSP90AB1. Forms a complex with ASL, ASS1 and SLC7A1; the complex regulates cell-autonomous L-arginine synthesis and citrulline recycling while channeling extracellular L-arginine to nitric oxide synthesis pathway. Requires heme b as cofactor. The cofactor is FAD. It depends on FMN as a cofactor. (6R)-L-erythro-5,6,7,8-tetrahydrobiopterin serves as cofactor. Post-translationally, phosphorylation by AMPK at Ser-1179 in the presence of Ca(2+)-calmodulin (CaM) activates activity. In absence of Ca(2+)-calmodulin, AMPK also phosphorylates Thr-497, resulting in inhibition of activity. Phosphorylation of Ser-116 by CDK5 reduces activity.

Its subcellular location is the membrane. It is found in the caveola. The protein resides in the cytoplasm. It localises to the cytoskeleton. The protein localises to the golgi apparatus. Its subcellular location is the cell membrane. The catalysed reaction is 2 L-arginine + 3 NADPH + 4 O2 + H(+) = 2 L-citrulline + 2 nitric oxide + 3 NADP(+) + 4 H2O. Its activity is regulated as follows. Stimulated by calcium/calmodulin. Inhibited by NOSIP and NOSTRIN. Its function is as follows. Produces nitric oxide (NO) which is implicated in vascular smooth muscle relaxation through a cGMP-mediated signal transduction pathway. NO mediates vascular endothelial growth factor (VEGF)-induced angiogenesis in coronary vessels and promotes blood clotting through the activation of platelets. The chain is Nitric oxide synthase 3 (NOS3) from Sus scrofa (Pig).